Reading from the N-terminus, the 268-residue chain is Undecaprenyl-diphosphatase (268 aa).

7 consecutive transmembrane segments (helical) span residues 41-61, 89-109, 114-134, 155-175, 191-211, 218-238, and 248-268; these read PGPS…VCYF, IFIG…FVPY, IFRS…LMYI, LIGL…GVTI, FSFL…FISS, FSFF…LLAI, and NGLK…LLNL.

The protein belongs to the UppP family.

It is found in the cell inner membrane. The enzyme catalyses di-trans,octa-cis-undecaprenyl diphosphate + H2O = di-trans,octa-cis-undecaprenyl phosphate + phosphate + H(+). In terms of biological role, catalyzes the dephosphorylation of undecaprenyl diphosphate (UPP). Confers resistance to bacitracin. This Prochlorococcus marinus (strain MIT 9312) protein is Undecaprenyl-diphosphatase.